The following is a 177-amino-acid chain: Large ribosomal subunit protein uL6 (177 aa).

This sequence belongs to the universal ribosomal protein uL6 family. In terms of assembly, part of the 50S ribosomal subunit.

Its function is as follows. This protein binds to the 23S rRNA, and is important in its secondary structure. It is located near the subunit interface in the base of the L7/L12 stalk, and near the tRNA binding site of the peptidyltransferase center. The protein is Large ribosomal subunit protein uL6 of Salmonella arizonae (strain ATCC BAA-731 / CDC346-86 / RSK2980).